Consider the following 465-residue polypeptide: Cerebellar degeneration-related protein 2-like (465 aa).

Coiled-coil stretches lie at residues 31–64 (AAEL…HEIE), 91–142 (ARDL…LEQL), and 188–266 (LEQE…YLLA). Residues 282–315 (APEADDPQPGSGDDSNAQDGVSSPAASPSHAVRK) form a disordered region. S308, S318, and S344 each carry phosphoserine. Residues 350–377 (MSILREVDEQYHALLEKYEELLSKCRQH) are a coiled coil. Residues 382-421 (RHAGVQTSRPISRDSSWRDLLGGEESPGEGKAGEKSLSQH) form a disordered region. Residue S407 is modified to Phosphoserine.

This sequence belongs to the CDR2 family.

In Mus musculus (Mouse), this protein is Cerebellar degeneration-related protein 2-like (Cdr2l).